Consider the following 376-residue polypeptide: Fibromodulin (376 aa).

The first 18 residues, 1–18 (MQWASILLLRGLCSLSQG), serve as a signal peptide directing secretion. Gln19 carries the post-translational modification Pyrrolidone carboxylic acid. Sulfotyrosine occurs at positions 20, 38, 53, 55, 63, and 65. Residues 67–105 (APPPPEPRDCPQECDCPPNFPTAMYCDNRNLKYLPFVPS) enclose the LRRNT domain. 8 LRR repeats span residues 106-127 (RMKY…VFDN), 130-143 (GLLW…QITS), 156-176 (HLER…PLPR), 177-198 (SLRE…ALEG), 201-222 (NLTA…MRGL), 224-245 (SLIL…LPSA), 246-266 (LEQL…YFRG), and 269-289 (KLLY…ATNT). Asn127 is a glycosylation site (N-linked (GlcNAc...) (keratan sulfate) asparagine). A glycan (N-linked (GlcNAc...) (keratan sulfate) asparagine) is linked at Asn166. A glycan (N-linked (GlcNAc...) (keratan sulfate) asparagine) is linked at Asn201. A glycan (N-linked (GlcNAc...) (keratan sulfate) asparagine) is linked at Asn291. LRR repeat units follow at residues 294-315 (SLLE…NTNL) and 316-335 (ENLY…SFCT). An intrachain disulfide couples Cys334 to Cys367. A glycan (N-linked (GlcNAc...) asparagine) is linked at Asn341. An LRR 11 repeat occupies 344-367 (KLQVLRLDGNEIKRSAMPVDAPLC).

Belongs to the small leucine-rich proteoglycan (SLRP) family. SLRP class II subfamily. As to quaternary structure, binds to type I and type II collagen. Post-translationally, binds keratan sulfate chains.

Its subcellular location is the secreted. It localises to the extracellular space. It is found in the extracellular matrix. Affects the rate of fibrils formation. May have a primary role in collagen fibrillogenesis. This is Fibromodulin (Fmod) from Rattus norvegicus (Rat).